Consider the following 127-residue polypeptide: PanD regulatory factor (127 aa).

The N-acetyltransferase domain occupies 1 to 127 (MKLTIIRLEK…TAQQGGWEKC (127 aa)). Interaction with PanD stretches follow at residues 43–48 (RFNERL) and 66–76 (LRVREVTRRRG). CoA is bound by residues 66–68 (LRV) and 72–79 (TRRRGVGQ).

It belongs to the PanZ/PanM family. Interacts with PanD in the presence of CoA. Forms a heterooctameric complex composed of four PanD subunits and four PanZ subunits. Monomer in solution.

Activation of PanD processing occurs even at low CoA concentrations. In contrast, full inhibition of PanD catalytic activity only occurs at sufficiently high CoA concentrations. Its function is as follows. Controls both the activation and catalytic activity of PanD in a coenzyme A (CoA)-dependent fashion. Binding of CoA or a derivative to PanZ leads to interaction with PanD, which promotes the processing and activation of pro-PanD, and subsequent substrate-mediated inhibition of the active form of PanD. Inhibition of PanD activity is probably the primary metabolic role of PanZ, allowing negative feedback regulation of pantothenate biosynthesis by CoA. This Escherichia coli (strain K12) protein is PanD regulatory factor.